The sequence spans 411 residues: Putative competence-damage inducible protein (411 aa).

It belongs to the CinA family.

The chain is Putative competence-damage inducible protein from Desulforamulus reducens (strain ATCC BAA-1160 / DSM 100696 / MI-1) (Desulfotomaculum reducens).